The chain runs to 305 residues: MNRLFKTIIENNRKWVSEGKVASYIPELSKMDKNLLGISVCTLGGEEYWEGDAEVKFTIQSISKIVTLMLAIIDNGEDYVFSKVGMEPTETAFNSIVNLEAKESHKPINPMINAGAIVVASMVAGKDSDEKFDRILKFTRKISGNNNIDINLNVYKSEKETGHRNRALAYFMKSTGALKGNVEEILDVYFKQCSIEITCKDLARIGVMLANDGVSPYTGDRIVPRHVARIVKTIMVTCGMYDASGNFAVHIGIPAKSGVGGGIVACAPRRMGIGVLGTALDEKGNSIAGTKILEELSKQLDLSIF.

Positions 61, 113, 158, 165, 189, 241, and 259 each coordinate substrate.

Belongs to the glutaminase family. As to quaternary structure, homotetramer.

It catalyses the reaction L-glutamine + H2O = L-glutamate + NH4(+). This chain is Glutaminase, found in Clostridium botulinum (strain 657 / Type Ba4).